A 259-amino-acid polypeptide reads, in one-letter code: Ribonuclease HII (259 aa).

Residues 72–259 (ERIAGIDEAG…PVREALGVQS (188 aa)) enclose the RNase H type-2 domain. A divalent metal cation contacts are provided by Asp-78, Glu-79, and Asp-170.

This sequence belongs to the RNase HII family. Mn(2+) is required as a cofactor. Mg(2+) serves as cofactor.

The protein resides in the cytoplasm. It catalyses the reaction Endonucleolytic cleavage to 5'-phosphomonoester.. Endonuclease that specifically degrades the RNA of RNA-DNA hybrids. The sequence is that of Ribonuclease HII from Geobacillus thermodenitrificans (strain NG80-2).